Consider the following 438-residue polypeptide: MTESYFASIAPIEFEGAASENPLAYRYYDKNRVVLGKRMEDHLRMAVCYWHTFCSEGADMFGPGTFHRPWHIGPMDQAHAEHKLNEAFEFFTRLGLPFFCFHDTDVMAEAHTIREHVDNLARIGDRIQEKMAATGVKLLWGTANLFSHPRYMAGAASNPDPDVFRFAATQVRHCMDLTKRLGGQNYVLWGGREGYDSLLNTDLKQEKAQLGRFLKMVIEHKHKIGFSGTILIEPKPHEPTKHQYDFDVETVYSFLVANGLEKEVKLNIEANHATLAGHSFEHEIATAVALGVFGSIDMNRGDPQNGWDTDQFPNDVREITTALYYILLGGGFTTGGNNFDAKVRRQSFEPADLFYAHVGAVDTVAQGLINAAAMIEGGQLAGIVKERYAGWQGELGRAILDGKMSLEALSDGAVAEGITPRPRSGRQEMIENLVGRYL.

Residues His-102 and Asp-105 contribute to the active site. Residues Glu-233, Glu-269, His-272, Asp-297, Asp-308, Asp-310, and Asp-340 each contribute to the Mg(2+) site.

This sequence belongs to the xylose isomerase family. In terms of assembly, homotetramer. Mg(2+) serves as cofactor.

It is found in the cytoplasm. It carries out the reaction alpha-D-xylose = alpha-D-xylulofuranose. The protein is Xylose isomerase of Solibacter usitatus (strain Ellin6076).